Consider the following 88-residue polypeptide: Large ribosomal subunit protein bL27 (88 aa).

Polar residues predominate over residues 1–13 (MATKKGASSSSNG). The disordered stretch occupies residues 1–25 (MATKKGASSSSNGRDSEAKRLGVKR).

The protein belongs to the bacterial ribosomal protein bL27 family.

The protein is Large ribosomal subunit protein bL27 of Corynebacterium efficiens (strain DSM 44549 / YS-314 / AJ 12310 / JCM 11189 / NBRC 100395).